We begin with the raw amino-acid sequence, 173 residues long: Large ribosomal subunit protein uL18 (173 aa).

It belongs to the universal ribosomal protein uL18 family. In terms of assembly, part of the 50S ribosomal subunit. Contacts the 5S and 23S rRNAs.

In terms of biological role, this is one of the proteins that bind and probably mediate the attachment of the 5S RNA into the large ribosomal subunit, where it forms part of the central protuberance. The protein is Large ribosomal subunit protein uL18 of Methanococcoides burtonii (strain DSM 6242 / NBRC 107633 / OCM 468 / ACE-M).